The following is a 657-amino-acid chain: PAN2-PAN3 deadenylation complex subunit PAN3 (657 aa).

Disordered stretches follow at residues 1–29 (MASA…HAKD), 52–98 (HDPS…SATI), and 115–135 (SRSN…EWSI). The segment at 27–55 (AKDTLCRNVTIYGRCRYEDKGCVFNHDPS) adopts a C3H1-type zinc-finger fold. Residues 52 to 67 (HDPSRVNDAQHPERSS) are compositionally biased toward basic and acidic residues. 2 stretches are compositionally biased toward polar residues: residues 75 to 98 (DSPS…SATI) and 115 to 132 (SRSN…STPE). The segment at 259–521 (QTLPNSQLPT…TIDIFISGIS (263 aa)) is pseudokinase domain. ATP-binding positions include Arg311, 360–367 (DYHPLSKT), and 421–422 (SK). Residues 522 to 560 (SQLMSTFDSSLHLDDQLISDLSRELENARLVRLLTKLNF) adopt a coiled-coil conformation. Residues 561 to 657 (INERPEYEHD…QALLKPARRI (97 aa)) form a knob domain region.

The protein belongs to the protein kinase superfamily. PAN3 family. As to quaternary structure, homodimer. Forms a heterotrimer with a catalytic subunit PAN2 to form the poly(A)-nuclease (PAN) deadenylation complex. Interacts (via PAM-2 motif) with poly(A)-binding protein PAB1 (via PABC domain), conferring substrate specificity of the enzyme complex.

It localises to the cytoplasm. Its function is as follows. Regulatory subunit of the poly(A)-nuclease (PAN) deadenylation complex, one of two cytoplasmic mRNA deadenylases involved in mRNA turnover. PAN specifically shortens poly(A) tails of RNA and the activity is stimulated by poly(A)-binding protein PAB1. PAN deadenylation is followed by rapid degradation of the shortened mRNA tails by the CCR4-NOT complex. Deadenylated mRNAs are then degraded by two alternative mechanisms, namely exosome-mediated 3'-5' exonucleolytic degradation, or deadenylation-dependent mRNA decaping and subsequent 5'-3' exonucleolytic degradation by XRN1. May also be involved in post-transcriptional maturation of mRNA poly(A) tails. PAN3 acts as a positive regulator for PAN activity, recruiting the catalytic subunit PAN2 to mRNA via its interaction with RNA and with PAB1. The polypeptide is PAN2-PAN3 deadenylation complex subunit PAN3 (Coccidioides immitis (strain RS) (Valley fever fungus)).